The primary structure comprises 906 residues: Eukaryotic translation initiation factor 4 gamma 2 (906 aa).

N-acetylmethionine is present on methionine 1. Residues 1–71 (MESAIAEGGA…SAANNSANEK (71 aa)) form a disordered region. Serine 11 is subject to Phosphoserine. The MIF4G domain maps to 78–308 (FRKVRGILNK…QDTVELREHH (231 aa)). Phosphothreonine is present on threonine 89. An Omega-N-methylarginine modification is found at arginine 359. Serine 394 carries the post-translational modification Phosphoserine. Lysine 430 is modified (N6-methyllysine). At serine 442 the chain carries Phosphoserine. Positions 497 to 540 (PPSAQPPRTQTPPLGQTPQLGLKTNPPLIQEKPAKTSKKPPPSK) are disordered. Positions 502–515 (PPRTQTPPLGQTPQ) are enriched in polar residues. Arginine 504 carries the post-translational modification Omega-N-methylarginine. Threonine 507 and threonine 513 each carry phosphothreonine. An MI domain is found at 542–665 (ELLKLTEAVV…SISELAQPLE (124 aa)). A Glycyl lysine isopeptide (Lys-Gly) (interchain with G-Cter in SUMO2) cross-link involves residue lysine 574. The W2 domain maps to 719–903 (EGKGLSFLFP…ETAEEEESEE (185 aa)). Phosphoserine is present on serine 901.

It belongs to the eukaryotic initiation factor 4G family. As to quaternary structure, interacts with the serine/threonine protein kinases MKNK1 and MKNK2. Binds EIF4A and EIF3. Interacts with MIF4GD. Interacts with DAZAP2. Post-translationally, phosphorylation; hyperphosphorylated during mitosis. Ubiquitously expressed in all tissues examined.

Appears to play a role in the switch from cap-dependent to IRES-mediated translation during mitosis, apoptosis and viral infection. Cleaved by some caspases and viral proteases. The protein is Eukaryotic translation initiation factor 4 gamma 2 of Mus musculus (Mouse).